We begin with the raw amino-acid sequence, 245 residues long: 8-amino-3,8-dideoxy-manno-octulosonate cytidylyltransferase (245 aa).

The protein belongs to the KdsB family.

The protein localises to the cytoplasm. The enzyme catalyses 8-amino-3,8-dideoxy-alpha-D-manno-octulosonate + CTP = CMP-8-amino-3,8-dideoxy-alpha-D-manno-oct-2-ulosonate + diphosphate. The protein operates within bacterial outer membrane biogenesis; lipopolysaccharide biosynthesis. Functionally, activates KDO8N (a required 8-carbon sugar) for incorporation into bacterial lipopolysaccharide in the Shewanella genus. This is 8-amino-3,8-dideoxy-manno-octulosonate cytidylyltransferase from Shewanella baltica (strain OS223).